The following is a 403-amino-acid chain: S-adenosylmethionine synthase (403 aa).

H16 is a binding site for ATP. A Mg(2+)-binding site is contributed by D18. E44 is a K(+) binding site. L-methionine contacts are provided by E57 and Q100. Positions 100-110 (QSPDIAQGVDR) are flexible loop. The disordered stretch occupies residues 106–126 (QGVDRSYESRSGSASTDAHDL). ATP-binding positions include 176-178 (DGK), 248-249 (KF), D257, 263-264 (RK), A280, and K284. Residue D257 coordinates L-methionine. K288 provides a ligand contact to L-methionine.

The protein belongs to the AdoMet synthase family. In terms of assembly, homotetramer; dimer of dimers. Requires Mg(2+) as cofactor. The cofactor is K(+).

The protein localises to the cytoplasm. It catalyses the reaction L-methionine + ATP + H2O = S-adenosyl-L-methionine + phosphate + diphosphate. Its pathway is amino-acid biosynthesis; S-adenosyl-L-methionine biosynthesis; S-adenosyl-L-methionine from L-methionine: step 1/1. Its function is as follows. Catalyzes the formation of S-adenosylmethionine (AdoMet) from methionine and ATP. The overall synthetic reaction is composed of two sequential steps, AdoMet formation and the subsequent tripolyphosphate hydrolysis which occurs prior to release of AdoMet from the enzyme. This Clavibacter sepedonicus (Clavibacter michiganensis subsp. sepedonicus) protein is S-adenosylmethionine synthase.